A 216-amino-acid polypeptide reads, in one-letter code: Somatotropin (216 aa).

An N-terminal signal peptide occupies residues 1 to 26 (MAAGPRTSMLLAFALLCLPWTQEVGA). His-45 is a Zn(2+) binding site. A disulfide bridge connects residues Cys-78 and Cys-189. Ser-131 bears the Phosphoserine mark. Glu-198 contacts Zn(2+). Cysteines 206 and 214 form a disulfide.

It belongs to the somatotropin/prolactin family.

The protein localises to the secreted. Functionally, plays an important role in growth control. Its major role in stimulating body growth is to stimulate the liver and other tissues to secrete IGF1. It stimulates both the differentiation and proliferation of myoblasts. It also stimulates amino acid uptake and protein synthesis in muscle and other tissues. This Balaenoptera physalus (Fin whale) protein is Somatotropin (GH1).